Consider the following 492-residue polypeptide: MO25-like protein 3 (492 aa).

A disordered region spans residues 442 to 492 (SRAGIRFGETRNVKGSPRSRSQSPRPPTGPEPSPRTTSYQNVRFPPEDSSR). Over residues 465-474 (PRPPTGPEPS) the composition is skewed to pro residues.

This sequence belongs to the Mo25 family.

The polypeptide is MO25-like protein 3 (Caenorhabditis briggsae).